A 208-amino-acid chain; its full sequence is OVARIAN TUMOR DOMAIN-containing deubiquitinating enzyme 2 (208 aa).

The 123-residue stretch at 5–127 (IVRRVIPSDN…GLHYDALALS (123 aa)) folds into the OTU domain. Asp-13 is a catalytic residue. The active-site Nucleophile is the Cys-16. Catalysis depends on residues His-120 and His-201.

This sequence belongs to the peptidase C85 family.

It catalyses the reaction Thiol-dependent hydrolysis of ester, thioester, amide, peptide and isopeptide bonds formed by the C-terminal Gly of ubiquitin (a 76-residue protein attached to proteins as an intracellular targeting signal).. Its function is as follows. Hydrolase that can remove conjugated ubiquitin from proteins in vitro and may therefore play an important regulatory role at the level of protein turnover by preventing degradation. Cysteine protease with a preference for 'Lys-63' and 'Lys-48' -linked ubiquitin (UB) tetramers as substrates. The protein is OVARIAN TUMOR DOMAIN-containing deubiquitinating enzyme 2 of Arabidopsis thaliana (Mouse-ear cress).